A 102-amino-acid polypeptide reads, in one-letter code: Protein transport protein sec61 subunit beta (102 aa).

Polar residues predominate over residues 1 to 15; sequence MSSTKASGSVKNSAA. Residues 1–53 are disordered; the sequence is MSSTKASGSVKNSAASAPGGPKSQIRRRAAVEKNTKESNSGPAGARAAGAPGS. At 1–72 the chain is on the cytoplasmic side; that stretch reads MSSTKASGSV…DEASGFKVDP (72 aa). The span at 41–52 shows a compositional bias: low complexity; that stretch reads GPAGARAAGAPG. Residues 73–93 form a helical membrane-spanning segment; it reads VVVMVLSVGFIASVFLLHIVA.

This sequence belongs to the SEC61-beta family. Heterotrimeric complex composed of SEC61, SBH1 and SSS1.

Its subcellular location is the endoplasmic reticulum membrane. Functionally, necessary for protein translocation in the endoplasmic reticulum. This Schizosaccharomyces pombe (strain 972 / ATCC 24843) (Fission yeast) protein is Protein transport protein sec61 subunit beta (sbh1).